The chain runs to 292 residues: Elongation factor Ts (292 aa).

The segment at 82-85 (TDFV) is involved in Mg(2+) ion dislocation from EF-Tu.

The protein belongs to the EF-Ts family.

It is found in the cytoplasm. Associates with the EF-Tu.GDP complex and induces the exchange of GDP to GTP. It remains bound to the aminoacyl-tRNA.EF-Tu.GTP complex up to the GTP hydrolysis stage on the ribosome. The sequence is that of Elongation factor Ts from Bordetella bronchiseptica (strain ATCC BAA-588 / NCTC 13252 / RB50) (Alcaligenes bronchisepticus).